Here is a 411-residue protein sequence, read N- to C-terminus: Exodeoxyribonuclease 7 large subunit (411 aa).

Belongs to the XseA family. In terms of assembly, heterooligomer composed of large and small subunits.

Its subcellular location is the cytoplasm. The enzyme catalyses Exonucleolytic cleavage in either 5'- to 3'- or 3'- to 5'-direction to yield nucleoside 5'-phosphates.. In terms of biological role, bidirectionally degrades single-stranded DNA into large acid-insoluble oligonucleotides, which are then degraded further into small acid-soluble oligonucleotides. This chain is Exodeoxyribonuclease 7 large subunit, found in Mycobacterium sp. (strain JLS).